A 182-amino-acid polypeptide reads, in one-letter code: Biotin transporter BioY2 (182 aa).

The next 5 membrane-spanning stretches (helical) occupy residues 12-32, 54-74, 78-98, 111-131, and 150-170; these read IALG…IGIV, FFAI…FTGG, IAVL…MGTL, IPAF…GTLW, and PFVF…LALI.

Belongs to the BioY family. As to quaternary structure, in E.coli forms a stable energy-coupling factor (ECF) transporter complex composed of 2 membrane-embedded substrate-binding protein (S component), 2 ATP-binding proteins (A and A' components) and 2 transmembrane proteins (T component), probably with a stoichiometry of 2:1:1:2. May be able to interact with more than 1 S component at a time.

It localises to the cell membrane. Functionally, probably a biotin-binding protein that interacts with the energy-coupling factor (ECF) ABC-transporter complex. Unlike classic ABC transporters this ECF transporter provides the energy necessary to transport a number of different substrates. The substrates themselves are bound by transmembrane, not extracytoplasmic soluble proteins. This is Biotin transporter BioY2 (bioY2) from Lactococcus lactis subsp. cremoris (strain MG1363).